Consider the following 118-residue polypeptide: Class I hydrophobin hum2 (118 aa).

The N-terminal stretch at 1-19 (MQFKTIFATLAAFAAVASA) is a signal peptide. 4 cysteine pairs are disulfide-bonded: Cys33-Cys98, Cys40-Cys92, Cys41-Cys74, and Cys99-Cys112.

It belongs to the fungal hydrophobin family. As to quaternary structure, self-assembles to form functional amyloid fibrils called rodlets. Self-assembly into fibrillar rodlets occurs spontaneously at hydrophobic:hydrophilic interfaces and the rodlets further associate laterally to form amphipathic monolayers.

It localises to the secreted. The protein localises to the cell wall. Its function is as follows. Aerial growth, conidiation, and dispersal of filamentous fungi in the environment rely upon a capability of their secreting small amphipathic proteins called hydrophobins (HPBs) with low sequence identity. Class I can self-assemble into an outermost layer of rodlet bundles on aerial cell surfaces, conferring cellular hydrophobicity that supports fungal growth, development and dispersal; whereas Class II form highly ordered films at water-air interfaces through intermolecular interactions but contribute nothing to the rodlet structure. Hum2 is a class I hydrophobin which that plays a role in, but seems not to be crucial for the formation of aerial hyphae. Hydrophobins of Mycosarcoma maydis have been functionally replaced, at least partially, by repellents. In Mycosarcoma maydis (Corn smut fungus), this protein is Class I hydrophobin hum2.